The following is a 413-amino-acid chain: Phosphoribosylamine--glycine ligase (413 aa).

An ATP-grasp domain is found at 108 to 310; the sequence is KQLMDKYRIP…LMQLIIDLEN (203 aa). Position 134–190 (134–190) interacts with ATP; it reads VETCDLPIVIKKDGLAAGKGVIIAFTREDALDGVKKIYQEEKGKVVFESYLEGEEFS. Residues glutamate 280 and asparagine 282 each contribute to the Mg(2+) site.

Belongs to the GARS family. It depends on Mg(2+) as a cofactor. Requires Mn(2+) as cofactor.

The catalysed reaction is 5-phospho-beta-D-ribosylamine + glycine + ATP = N(1)-(5-phospho-beta-D-ribosyl)glycinamide + ADP + phosphate + H(+). It participates in purine metabolism; IMP biosynthesis via de novo pathway; N(1)-(5-phospho-D-ribosyl)glycinamide from 5-phospho-alpha-D-ribose 1-diphosphate: step 2/2. The protein is Phosphoribosylamine--glycine ligase of Staphylococcus epidermidis (strain ATCC 12228 / FDA PCI 1200).